The sequence spans 372 residues: Adaptive-response sensory kinase SasA (372 aa).

A Histidine kinase domain is found at Met147 to Gln360. His150 bears the Phosphohistidine; by autocatalysis mark.

As to quaternary structure, homooligomerizes. Interacts with KaiC. Participates in the KaiBC complex, whose core is composed of a KaiC homohexamer and 6 KaiB.

It carries out the reaction ATP + protein L-histidine = ADP + protein N-phospho-L-histidine.. Functionally, member of the two-component regulatory system SasA/RpaA involved in genome-wide circadian gene expression. One of several clock output pathways. Participates in the Kai clock protein complex, the main circadian regulator in cyanobacteria, via its interaction with KaiC. KaiC enhances the autophosphorylation activity of SasA, which then transfers its phosphate group to RpaA to activate it. In addition to its output function, recruits fold-shifted KaiB (KaiB(fs)) to KaiC to cooperatively form the KaiB(6):KaiC(6) complex (independent of SasA kinase activity). Required for robustness of the circadian rhythm of gene expression and is involved in clock output, also required for adaptation to light/dark cycles. The protein is Adaptive-response sensory kinase SasA of Prochlorococcus marinus (strain AS9601).